A 100-amino-acid polypeptide reads, in one-letter code: Urease subunit gamma (100 aa).

The protein belongs to the urease gamma subunit family. As to quaternary structure, heterotrimer of UreA (gamma), UreB (beta) and UreC (alpha) subunits. Three heterotrimers associate to form the active enzyme.

The protein localises to the cytoplasm. The enzyme catalyses urea + 2 H2O + H(+) = hydrogencarbonate + 2 NH4(+). It participates in nitrogen metabolism; urea degradation; CO(2) and NH(3) from urea (urease route): step 1/1. In Corynebacterium efficiens (strain DSM 44549 / YS-314 / AJ 12310 / JCM 11189 / NBRC 100395), this protein is Urease subunit gamma.